A 4303-amino-acid chain; its full sequence is Polycystin-1 (4303 aa).

The signal sequence occupies residues 1 to 23 (MPPAAPARLALALGLGLWLGALA). In terms of domain architecture, LRRNT spans 24 to 67 (GGPGRGCGPCEPPCLCGPAPGAACRVNCSGRGLRTLGPALRIPA). The Extracellular portion of the chain corresponds to 24 to 3074 (GGPGRGCGPC…VFPEPTADVN (3051 aa)). 2 N-linked (GlcNAc...) asparagine glycosylation sites follow: Asn-50 and Asn-89. LRR repeat units follow at residues 68–91 (DATA…ANLS) and 92–113 (ALAE…IFAN). N-linked (GlcNAc...) asparagine glycosylation is found at Asn-116 and Asn-121. Residues 125–178 (NPFECDCGLAWLPRWAEEQQVRVVQPEAATCAGPGSLAGQPLLGIPLLDSGCGE) form the LRRCT domain. The 95-residue stretch at 177-271 (GEEYVACLPD…PTLLQHVFPA (95 aa)) folds into the WSC domain. The N-linked (GlcNAc...) asparagine glycan is linked to Asn-187. The region spanning 272-359 (SPGATLVGPH…VQVEAAPAAL (88 aa)) is the PKD 1 domain. The C-type lectin domain occupies 415–531 (GNGHCYRLVV…CSAPHSYVCE (117 aa)). 2 disulfide bridges follow: Cys-436–Cys-530 and Cys-508–Cys-522. Residues 616–635 (AGTPENGSEPESRSPDNRTQ) form a disordered region. Asn-621 and Asn-632 each carry an N-linked (GlcNAc...) asparagine glycan. The region spanning 638-671 (PACMPGGRWCPGANICLPLDASCHPQACANGCTS) is the LDL-receptor class A; atypical domain. Disulfide bonds link Cys-640–Cys-653, Cys-647–Cys-665, and Cys-660–Cys-669. Positions 743–817 (LSANASSWLP…RHNLSCSFDV (75 aa)) constitute a PKD 2 domain. N-linked (GlcNAc...) asparagine glycosylation is found at Asn-746, Asn-810, Asn-841, Asn-854, Asn-890, Asn-921, Asn-1004, Asn-1010, Asn-1034, Asn-1072, Asn-1113, Asn-1178, Asn-1194, Asn-1240, Asn-1269, Asn-1336, Asn-1348, Asn-1382, Asn-1450, Asn-1455, Asn-1474, Asn-1518, Asn-1541, Asn-1554, Asn-1563, Asn-1647, Asn-1661, Asn-1733, Asn-1791, Asn-1834, Asn-1867, and Asn-1880. PKD domains lie at 855 to 928 (ATAT…RVTA), 935 to 1020 (LRAT…NRMQ), 1023 to 1129 (QVST…LPSV), 1127 to 1215 (PSVA…LRGL), 1213 to 1298 (RGLS…EVLR), 1294 to 1383 (LEVL…VGNV), 1382 to 1469 (NVTL…VLVT), 1468 to 1551 (VTSI…VRGL), 1550 to 1635 (GLVV…IEGL), 1634 to 1721 (GLQV…VGWL), 1719 to 1805 (GWLM…VSGL), 1807 to 1890 (IRAS…IVGL), 1889 to 1974 (GLVL…VSGL), 1977 to 2057 (PNCC…VLEV), and 2060 to 2148 (AVQY…ACRE). 18 N-linked (GlcNAc...) asparagine glycosylation sites follow: Asn-1991, Asn-2050, Asn-2074, Asn-2125, Asn-2248, Asn-2353, Asn-2395, Asn-2412, Asn-2567, Asn-2578, Asn-2645, Asn-2718, Asn-2754, Asn-2841, Asn-2878, Asn-2925, Asn-2956, and Asn-2994. The REJ domain maps to 2146 to 2833 (CREPEVDVVL…QLIFLVDSNP (688 aa)). The GAIN-B domain maps to 2862–3063 (PIERLASERA…SLFVPPSHVR (202 aa)). The cysteines at positions 3015 and 3043 are disulfide-linked. The tract at residues 3015–3063 (CQYFSEEDMVWRTEGLLPLEETSPRQAVCLTRHLTAFGASLFVPPSHVR) is GPS. Residues 3075–3095 (YIVMLTCAVCLVTYMVMAAIL) form a helical membrane-spanning segment. At 3096-3277 (HKLDQLDASR…DRPPRSRFTR (182 aa)) the chain is on the cytoplasmic side. The PLAT domain occupies 3118–3233 (FKYEILVKTG…EANGGLVEKE (116 aa)). Residues 3278-3298 (IQRATCCVLLICLFLGANAVW) traverse the membrane as a helical segment. At 3299 to 3323 (YGAVGDSAYSTGHVSRLSPLSVDTV) the chain is on the extracellular side. The helical transmembrane segment at 3324–3344 (AVGLVSSVVVYPVYLAILFLF) threads the bilayer. Topologically, residues 3345 to 3559 (RMSRSKVAGS…LPAWCASLAH (215 aa)) are cytoplasmic. A helical membrane pass occupies residues 3560–3580 (GLSLLLVAVAVAVSGWVGASF). Residues 3581-3582 (PP) are Extracellular-facing. Residues 3583–3603 (GVSVAWLLSSSASFLASFLGW) form a helical membrane-spanning segment. Over 3604–3665 (EPLKVLLEAL…LAKEEARKVK (62 aa)) the chain is Cytoplasmic. Residues 3666–3686 (RLHGMLRSLLVYMLFLLVTLL) form a helical membrane-spanning segment. Topologically, residues 3687 to 3901 (ASYGDASCHG…RLSAGLSLPL (215 aa)) are extracellular. N-linked (GlcNAc...) asparagine glycans are attached at residues Asn-3738, Asn-3790, and Asn-3845. The chain crosses the membrane as a helical span at residues 3902–3922 (LTSVCLLLFAVHFAVAEARTW). The Cytoplasmic portion of the chain corresponds to 3923 to 3935 (HREGRWRVLRLGA). Residues 3936 to 3956 (WARWLLVALTAATALVRLAQL) form a helical membrane-spanning segment. Residues 3957–3984 (GAADRQWTRFVRGRPRRFTSFDQVAQLS) are Extracellular-facing. A helical transmembrane segment spans residues 3985–4005 (SAARGLAASLLFLLLVKAAQQ). The Cytoplasmic portion of the chain corresponds to 4006–4027 (LRFVRQWSVFGKTLCRALPELL). A helical membrane pass occupies residues 4028 to 4048 (GVTLGLVVLGVAYAQLAILLV). Residues 4049–4090 (SSCVDSLWSVAQALLVLCPGTGLSTLCPAESWHLSPLLCVGL) lie on the Extracellular side of the membrane. Residues 4091–4110 (WALRLWGALRLGAVILRWRY) traverse the membrane as a helical segment. The Cytoplasmic segment spans residues 4111-4303 (HALRGELYRP…AKNKVHPSST (193 aa)). 2 disordered regions span residues 4160-4196 (PLPS…QLDG) and 4243-4303 (LHSL…PSST). Ser-4166 bears the Phosphoserine; by PRKX; in vitro mark. A compositionally biased stretch (polar residues) spans 4185–4195 (SHPSTSSSQLD). A coiled-coil region spans residues 4220-4251 (EALLTQFDRLNQATEDVYQLEQQLHSLQGRRS). Residues 4253–4269 (RAPAGSSRGPSPGLRPA) show a composition bias toward low complexity. Residues 4292-4303 (LRAKNKVHPSST) show a composition bias toward basic residues.

It belongs to the polycystin family. In terms of assembly, component of the heterotetrameric polycystin channel complex with PKD2; the tetramer contains one PKD1 chain and three PKD2 chains. Interacts with PKD2; the interaction is required for ciliary localization. Interacts with PKD2L1. Interacts with PRKX; involved in differentiation and controlled morphogenesis of the kidney. Interacts (via extracellular domain) with WNT3A, WNT4, WNT5A and WNT9B. Interacts with DVL1 and DVL2. Interacts with NPHP1 (via SH3 domain). Interacts with BBS1, BBS4, BBS5 and TTC8. Interacts with RGS7. Interacts (via the PKD repeats in the N-terminal extracellular region) with EPCIP; the interaction is not dependent on N-glycosylation of either protein. N-glycosylated. Post-translationally, after synthesis, undergoes cleavage between Leu-3048 and Thr-3049 in the GPS region of the GAIN-B domain. Cleavage at the GPS region occurs through a cis-autoproteolytic mechanism involving an ester-intermediate via N-O acyl rearrangement. This process takes place in the early secretory pathway, depends on initial N-glycosylation, and requires the REJ domain. There is evidence that cleavage at GPS region is incomplete. Uncleaved and cleaved products may have different functions in vivo.

The protein resides in the cell membrane. It is found in the cell projection. Its subcellular location is the cilium. It localises to the endoplasmic reticulum. The protein localises to the golgi apparatus. The protein resides in the vesicle. It is found in the secreted. Its subcellular location is the extracellular exosome. Component of a heteromeric calcium-permeable ion channel formed by PKD1 and PKD2 that is activated by interaction between PKD1 and a Wnt family member, such as WNT3A and WNT9B. Both PKD1 and PKD2 are required for channel activity. Involved in renal tubulogenesis. Involved in fluid-flow mechanosensation by the primary cilium in renal epithelium. Acts as a regulator of cilium length, together with PKD2. The dynamic control of cilium length is essential in the regulation of mechanotransductive signaling. The cilium length response creates a negative feedback loop whereby fluid shear-mediated deflection of the primary cilium, which decreases intracellular cAMP, leads to cilium shortening and thus decreases flow-induced signaling. May be an ion-channel regulator. Involved in adhesive protein-protein and protein-carbohydrate interactions. Likely to be involved with polycystin-1-interacting protein 1 in the detection, sequestration and exocytosis of senescent mitochondria. The polypeptide is Polycystin-1 (Homo sapiens (Human)).